The chain runs to 379 residues: PqqA peptide cyclase (379 aa).

The Radical SAM core domain maps to 8–220 (LPAPIGLLAE…IRVVEEARER (213 aa)). 3 residues coordinate [4Fe-4S] cluster: cysteine 22, cysteine 26, and cysteine 29.

The protein belongs to the radical SAM superfamily. PqqE family. As to quaternary structure, interacts with PqqD. The interaction is necessary for activity of PqqE. It depends on [4Fe-4S] cluster as a cofactor.

The catalysed reaction is [PQQ precursor protein] + S-adenosyl-L-methionine = E-Y cross-linked-[PQQ precursor protein] + 5'-deoxyadenosine + L-methionine + H(+). Its pathway is cofactor biosynthesis; pyrroloquinoline quinone biosynthesis. Catalyzes the cross-linking of a glutamate residue and a tyrosine residue in the PqqA protein as part of the biosynthesis of pyrroloquinoline quinone (PQQ). The sequence is that of PqqA peptide cyclase from Methylobacterium sp. (strain 4-46).